Here is an 88-residue protein sequence, read N- to C-terminus: MLVTEKKQEIVNAHKLHDSDTGSPEVQIALLSERITYLTEHFKTHKKDHHSRRGLLKIVGQRRGLLDYLKKKDVERYKSIIAKLGIRR.

This sequence belongs to the universal ribosomal protein uS15 family. As to quaternary structure, part of the 30S ribosomal subunit. Forms a bridge to the 50S subunit in the 70S ribosome, contacting the 23S rRNA.

One of the primary rRNA binding proteins, it binds directly to 16S rRNA where it helps nucleate assembly of the platform of the 30S subunit by binding and bridging several RNA helices of the 16S rRNA. Its function is as follows. Forms an intersubunit bridge (bridge B4) with the 23S rRNA of the 50S subunit in the ribosome. The chain is Small ribosomal subunit protein uS15 from Geobacter sp. (strain M21).